The primary structure comprises 108 residues: Movement protein TGB2 (108 aa).

At 1-14 (MPLTPPPDHSITYR) the chain is on the cytoplasmic side. A helical membrane pass occupies residues 15–31 (ILAVGLCSCCAIYAATR). The Lumenal portion of the chain corresponds to 32–67 (STLPHTGDNLHSLPYGGKYSDGTKSICYSGPGPTPD). The chain crosses the membrane as a helical span at residues 68–85 (IPTHLPALLVLVLVVAIY). Residues 86 to 108 (ASSRLDFSVNYRCSCRVHNRSGQ) lie on the Cytoplasmic side of the membrane.

This sequence belongs to the Tymovirales TGBp2 protein family.

It localises to the host endoplasmic reticulum membrane. In terms of biological role, plays a role in viral cell-to-cell propagation, by facilitating genome transport to neighboring plant cells through plasmosdesmata,. The polypeptide is Movement protein TGB2 (Strawberry mild yellow edge-associated virus (SMYEaV)).